Here is a 151-residue protein sequence, read N- to C-terminus: Flavodoxin YqcA (151 aa).

Residues 4–145 (IGIFVGTVYG…ISCPWVEAWA (142 aa)) enclose the Flavodoxin-like domain. Residues 10–15 (TVYGNA) and 99–101 (NFC) each bind FMN.

The protein belongs to the flavodoxin family. MioC subfamily. In terms of assembly, monomer. FMN serves as cofactor.

Probable electron transporter. The sequence is that of Flavodoxin YqcA from Pectobacterium carotovorum subsp. carotovorum (Erwinia carotovora subsp. carotovora).